Consider the following 344-residue polypeptide: Acyl-CoA ligase clz12 (344 aa).

2 AMP-binding regions span residues 2–239 (VQRS…IIKV) and 248–322 (ELET…PSGK).

This sequence belongs to the ATP-dependent AMP-binding enzyme family.

It participates in secondary metabolite biosynthesis. Functionally, acyl-CoA ligase; part of the gene cluster that mediates the biosynthesis of squalestatin S1 (SQS1, also known as zaragozic acid A), a heavily oxidized fungal polyketide that offers potent cholesterol lowering activity by targeting squalene synthase (SS). SQS1 is composed of a 2,8-dioxobicyclic[3.2.1]octane-3,4,5-tricarboxyclic acid core that is connected to two lipophilic polyketide arms. These initial steps feature the priming of an unusual benzoic acid starter unit onto the highly reducing polyketide synthase clz14, followed by oxaloacetate extension and product release to generate a tricarboxylic acid containing product. The phenylalanine ammonia lyase (PAL) clz10 and the acyl-CoA ligase clz12 are involved in transforming phenylalanine into benzoyl-CoA. The citrate synthase-like protein clz17 is involved in connecting the C-alpha-carbons of the hexaketide chain and oxaloacetate to afford the tricarboxylic acid unit. The potential hydrolytic enzymes, clz11 and clz13, are in close proximity to pks2 and may participate in product release. On the other side, the tetraketide arm is synthesized by a the squalestatin tetraketide synthase clz2 and enzymatically esterified to the core in the last biosynthetic step, by the acetyltransferase clz6. The biosynthesis of the tetraketide must involve 3 rounds of chain extension. After the first and second rounds methyl-transfer occurs, and in all rounds of extension the ketoreductase and dehydratase are active. The enoyl reductase and C-MeT of clz2 are not active in the final round of extension. The acetyltransferase clz6 appears to have a broad substrate selectivity for its acyl CoA substrate, allowing the in vitro synthesis of novel squalestatins. The biosynthesis of SQS1 requires several oxidative steps likely performed by oxidoreductases clz3, clz15 and clz16. Finally, in support of the identification of the cluster as being responsible for SQS1 production, the cluster contains a gene encoding a putative squalene synthase (SS) clz20, suggesting a likely mechanism for self-resistance. The sequence is that of Acyl-CoA ligase clz12 from Cochliobolus lunatus (Filamentous fungus).